Reading from the N-terminus, the 338-residue chain is Oxygen-dependent coproporphyrinogen-III oxidase (338 aa).

Position 104 (Ser-104) interacts with substrate. The a divalent metal cation site is built by His-108 and His-118. His-118 (proton donor) is an active-site residue. Residue 120–122 participates in substrate binding; the sequence is NYR. A divalent metal cation is bound by residues His-152 and His-182. An important for dimerization region spans residues 274-309; that stretch reads YVEFNLVYDRGTIFGLQTNGRTESILMSLPPLVRWE.

This sequence belongs to the aerobic coproporphyrinogen-III oxidase family. Homodimer. A divalent metal cation serves as cofactor.

It localises to the cytoplasm. It catalyses the reaction coproporphyrinogen III + O2 + 2 H(+) = protoporphyrinogen IX + 2 CO2 + 2 H2O. The protein operates within porphyrin-containing compound metabolism; protoporphyrin-IX biosynthesis; protoporphyrinogen-IX from coproporphyrinogen-III (O2 route): step 1/1. Its function is as follows. Involved in the heme and chlorophyll biosynthesis. Catalyzes the aerobic oxidative decarboxylation of propionate groups of rings A and B of coproporphyrinogen-III to yield the vinyl groups in protoporphyrinogen-IX. This chain is Oxygen-dependent coproporphyrinogen-III oxidase, found in Thermosynechococcus vestitus (strain NIES-2133 / IAM M-273 / BP-1).